Reading from the N-terminus, the 500-residue chain is MPHTIKKMSLIGLILMIFTSVFGFANSPSAYYLMGYSAIPFYIFSALLFFIPFALMMAEMGAAYRKEEGGIYSWMNNSVGPRFAFIGTFMWFSSYIIWMVSTSAKVWVPFSTFLYGSDMTQHWRIAGLEPTQVVGLLAVAWMILVTVVASKGINKIARITAVGGIAVMCLNLVLLLVSITILLLNGGHFAQDINFLASPNPGYQSGLAMLSFVVFAIFAYGGIEAVGGLVDKTENPEKNFAKGIVFAAIVISIGYSLAIFLWGVSTNWQQVLSNGSVNLGNITYVLMKSLGMTLGNALHLSPEASLSLGVWFARITGLSMFLAYTGAFFTLCYSPLKAIIQGTPKALWPEPMTRLNAMGMPSIAMWMQCGLVTVFILLVSFGGGTASAFFNKLTLMANVSMTLPYLFLALAFPFFKARQDLDRPFVIFKTHLSAMIATVVVVLVVTFANVFTIIQPVVEAGDWDSTLWMIGGPVFFSLLAMAIYQNYCSRVAKNPQWAVE.

Topologically, residues 1–7 (MPHTIKK) are cytoplasmic. Residues 8 to 28 (MSLIGLILMIFTSVFGFANSP) traverse the membrane as a helical segment. The Periplasmic portion of the chain corresponds to 29–37 (SAYYLMGYS). The helical transmembrane segment at 38–58 (AIPFYIFSALLFFIPFALMMA) threads the bilayer. The Cytoplasmic portion of the chain corresponds to 59-82 (EMGAAYRKEEGGIYSWMNNSVGPR). Residues 83–103 (FAFIGTFMWFSSYIIWMVSTS) form a helical membrane-spanning segment. Topologically, residues 104-132 (AKVWVPFSTFLYGSDMTQHWRIAGLEPTQ) are periplasmic. Residues 133–153 (VVGLLAVAWMILVTVVASKGI) traverse the membrane as a helical segment. At 154 to 163 (NKIARITAVG) the chain is on the cytoplasmic side. Residues 164-184 (GIAVMCLNLVLLLVSITILLL) traverse the membrane as a helical segment. Residues 185–209 (NGGHFAQDINFLASPNPGYQSGLAM) lie on the Periplasmic side of the membrane. Residues 210–230 (LSFVVFAIFAYGGIEAVGGLV) traverse the membrane as a helical segment. At 231 to 243 (DKTENPEKNFAKG) the chain is on the cytoplasmic side. The helical transmembrane segment at 244 to 264 (IVFAAIVISIGYSLAIFLWGV) threads the bilayer. Residues 265–319 (STNWQQVLSNGSVNLGNITYVLMKSLGMTLGNALHLSPEASLSLGVWFARITGLS) lie on the Periplasmic side of the membrane. Residues 320-340 (MFLAYTGAFFTLCYSPLKAII) form a helical membrane-spanning segment. At 341-369 (QGTPKALWPEPMTRLNAMGMPSIAMWMQC) the chain is on the cytoplasmic side. A helical transmembrane segment spans residues 370–390 (GLVTVFILLVSFGGGTASAFF). Over 391 to 394 (NKLT) the chain is Periplasmic. The chain crosses the membrane as a helical span at residues 395 to 415 (LMANVSMTLPYLFLALAFPFF). The Cytoplasmic segment spans residues 416–433 (KARQDLDRPFVIFKTHLS). A helical membrane pass occupies residues 434-454 (AMIATVVVVLVVTFANVFTII). The Periplasmic portion of the chain corresponds to 455–462 (QPVVEAGD). The helical transmembrane segment at 463 to 483 (WDSTLWMIGGPVFFSLLAMAI) threads the bilayer. The Cytoplasmic segment spans residues 484–500 (YQNYCSRVAKNPQWAVE).

The protein belongs to the amino acid-polyamine-organocation (APC) superfamily.

The protein localises to the cell inner membrane. In Escherichia coli (strain K12), this protein is Inner membrane transporter YjeM (yjeM).